We begin with the raw amino-acid sequence, 564 residues long: Pyruvate decarboxylase (564 aa).

D28 and H115 together coordinate pyruvate. Thiamine diphosphate-binding positions include T390 and 413–415; that span reads GSI. D444 is a Mg(2+) binding site. Residues 445 to 446 and 471 to 476 contribute to the thiamine diphosphate site; these read GS and NDGYTI. Mg(2+)-binding residues include N471 and G473. A pyruvate-binding site is contributed by E477.

The protein belongs to the TPP enzyme family. In terms of assembly, homotetramer. It depends on Mg(2+) as a cofactor. The cofactor is thiamine diphosphate.

The enzyme catalyses a 2-oxocarboxylate + H(+) = an aldehyde + CO2. It catalyses the reaction pyruvate + H(+) = acetaldehyde + CO2. This chain is Pyruvate decarboxylase (PDC1), found in Kluyveromyces marxianus (Yeast).